The chain runs to 274 residues: ATP synthase subunit a (274 aa).

The next 5 membrane-spanning stretches (helical) occupy residues 43 to 63 (TLNIDSLFFSVVLGLAFLLVF), 103 to 123 (VIAPLALTVFVWVLLMNMMDL), 149 to 169 (DVSITLSMALGVFILIIFYSI), 223 to 243 (LIFILIAGLLPWWSQWMLSVP), and 245 to 265 (AIFHILIITLQAFIFMVLTIV).

This sequence belongs to the ATPase A chain family. In terms of assembly, F-type ATPases have 2 components, CF(1) - the catalytic core - and CF(0) - the membrane proton channel. CF(1) has five subunits: alpha(3), beta(3), gamma(1), delta(1), epsilon(1). CF(0) has three main subunits: a(1), b(2) and c(9-12). The alpha and beta chains form an alternating ring which encloses part of the gamma chain. CF(1) is attached to CF(0) by a central stalk formed by the gamma and epsilon chains, while a peripheral stalk is formed by the delta and b chains.

The protein localises to the cell inner membrane. In terms of biological role, key component of the proton channel; it plays a direct role in the translocation of protons across the membrane. The sequence is that of ATP synthase subunit a from Yersinia pestis bv. Antiqua (strain Antiqua).